We begin with the raw amino-acid sequence, 141 residues long: Large-conductance mechanosensitive channel (141 aa).

Transmembrane regions (helical) follow at residues 8–28 (FALK…AAFG), 38–58 (IIMP…FFPL), and 80–100 (GNFL…FLIV).

It belongs to the MscL family. As to quaternary structure, homopentamer.

The protein localises to the cell inner membrane. In terms of biological role, channel that opens in response to stretch forces in the membrane lipid bilayer. May participate in the regulation of osmotic pressure changes within the cell. In Beijerinckia indica subsp. indica (strain ATCC 9039 / DSM 1715 / NCIMB 8712), this protein is Large-conductance mechanosensitive channel.